The sequence spans 111 residues: Propane 2-monooxygenase, effector component (111 aa).

It belongs to the TmoD/XamoD family. In terms of assembly, the propane 2-monooxygenase multicomponent enzyme system is composed of an electron transfer component and a monooxygenase component interacting with the effector protein PrmD. The electron transfer component is composed of a reductase (PrmB), and the monooxygenase component is formed by a large subunit (PrmA) and a small subunit (PrmC).

Effector component of the propane 2-monooxygenase multicomponent enzyme system which is involved in the degradation of propane via the O2-dependent hydroxylation of propane. The sequence is that of Propane 2-monooxygenase, effector component from Gordonia sp. (strain TY-5).